Reading from the N-terminus, the 317-residue chain is Transaldolase (317 aa).

Lys126 functions as the Schiff-base intermediate with substrate in the catalytic mechanism.

This sequence belongs to the transaldolase family. Type 1 subfamily. In terms of assembly, homodimer.

It localises to the cytoplasm. The enzyme catalyses D-sedoheptulose 7-phosphate + D-glyceraldehyde 3-phosphate = D-erythrose 4-phosphate + beta-D-fructose 6-phosphate. Its pathway is carbohydrate degradation; pentose phosphate pathway; D-glyceraldehyde 3-phosphate and beta-D-fructose 6-phosphate from D-ribose 5-phosphate and D-xylulose 5-phosphate (non-oxidative stage): step 2/3. Functionally, transaldolase is important for the balance of metabolites in the pentose-phosphate pathway. This chain is Transaldolase, found in Burkholderia vietnamiensis (strain G4 / LMG 22486) (Burkholderia cepacia (strain R1808)).